The chain runs to 269 residues: Chymotrypsin-like elastase family member 2A (269 aa).

Residues 1-16 form the signal peptide; the sequence is MIRTLLLSTLVAGALS. A propeptide spans 17–28 (activation peptide); sequence CGDPTYPPYVTR. Positions 29-267 constitute a Peptidase S1 domain; sequence VVGGEEARPN…YIDWINSVIA (239 aa). Cys58 and Cys74 are oxidised to a cystine. Active-site charge relay system residues include His73 and Asp121. 3 disulfides stabilise this stretch: Cys155-Cys222, Cys186-Cys202, and Cys212-Cys243. Ser216 acts as the Charge relay system in catalysis.

Belongs to the peptidase S1 family. Elastase subfamily. Interacts with CPA1. Interacts with SERPINA1. In terms of tissue distribution, expressed in pancreas. Not detected in keratinocytes. Detected in exocrine secretions of the pancreas (at protein level). Also expressed in a small fraction of cells in pancreatic islets, adrenal cortex, intestinal glands and colonic lymphoid follicles (at protein level). Detected in plasma.

It localises to the secreted. The catalysed reaction is Preferential cleavage: Leu-|-Xaa, Met-|-Xaa and Phe-|-Xaa. Hydrolyzes elastin.. In terms of biological role, elastase that enhances insulin signaling and might have a physiologic role in cellular glucose metabolism. Circulates in plasma and reduces platelet hyperactivation, triggers both insulin secretion and degradation, and increases insulin sensitivity. The sequence is that of Chymotrypsin-like elastase family member 2A from Homo sapiens (Human).